A 451-amino-acid chain; its full sequence is Hexokinase (451 aa).

Residues 6 to 445 enclose the Hexokinase domain; that stretch reads QQLFEKVVEI…SGKGAAAIAA (440 aa). Residues 63 to 195 are hexokinase small subdomain; the sequence is NGTETGNFLA…ELNVKCVAVV (133 aa). Position 74 to 79 (74 to 79) interacts with ATP; sequence DLGGTN. Substrate-binding positions include Ser144, 161 to 162, 196 to 197, 222 to 223, Glu249, and Glu283; these read TK, ND, and TN. The tract at residues 196–434 is hexokinase large subdomain; the sequence is NDTVGTLASC…TRFCLRLSED (239 aa). ATP contacts are provided by residues 288 to 289, 325 to 329, and 401 to 405; these read GM, TRYLT, and SLYKF.

This sequence belongs to the hexokinase family. In terms of assembly, monomer.

The catalysed reaction is a D-hexose + ATP = a D-hexose 6-phosphate + ADP + H(+). It carries out the reaction D-mannose + ATP = D-mannose 6-phosphate + ADP + H(+). The enzyme catalyses D-fructose + ATP = D-fructose 6-phosphate + ADP + H(+). It catalyses the reaction D-glucose + ATP = D-glucose 6-phosphate + ADP + H(+). The protein operates within carbohydrate metabolism; hexose metabolism. It participates in carbohydrate degradation; glycolysis; D-glyceraldehyde 3-phosphate and glycerone phosphate from D-glucose: step 1/4. Catalyzes the phosphorylation of various hexoses to hexose 6-phosphate. This chain is Hexokinase, found in Schistosoma mansoni (Blood fluke).